The chain runs to 222 residues: 7-cyano-7-deazaguanine synthase (222 aa).

Residue Leu-11–Leu-21 coordinates ATP. Residues Cys-192, Cys-200, Cys-203, and Cys-206 each coordinate Zn(2+).

Belongs to the QueC family. Zn(2+) is required as a cofactor.

It carries out the reaction 7-carboxy-7-deazaguanine + NH4(+) + ATP = 7-cyano-7-deazaguanine + ADP + phosphate + H2O + H(+). It participates in purine metabolism; 7-cyano-7-deazaguanine biosynthesis. In terms of biological role, catalyzes the ATP-dependent conversion of 7-carboxy-7-deazaguanine (CDG) to 7-cyano-7-deazaguanine (preQ(0)). The chain is 7-cyano-7-deazaguanine synthase from Sulfurihydrogenibium sp. (strain YO3AOP1).